Reading from the N-terminus, the 597-residue chain is CTP synthase (597 aa).

The interval methionine 1–leucine 272 is amidoligase domain. Serine 18 provides a ligand contact to CTP. Serine 18 is a UTP binding site. Serine 19–isoleucine 24 is a binding site for ATP. Residue tyrosine 59 coordinates L-glutamine. Aspartate 76 serves as a coordination point for ATP. Positions 76 and 146 each coordinate Mg(2+). CTP is bound by residues aspartate 153–glutamate 155, lysine 193–glutamine 198, and lysine 229. Residues lysine 193 to glutamine 198 and lysine 229 each bind UTP. The Glutamine amidotransferase type-1 domain maps to asparagine 299 to glycine 543. Glycine 363 lines the L-glutamine pocket. The Nucleophile; for glutamine hydrolysis role is filled by cysteine 390. Residues leucine 391 to glutamine 394, glutamate 414, and arginine 471 contribute to the L-glutamine site. Catalysis depends on residues histidine 516 and glutamate 518.

Belongs to the CTP synthase family. As to quaternary structure, homotetramer.

The catalysed reaction is UTP + L-glutamine + ATP + H2O = CTP + L-glutamate + ADP + phosphate + 2 H(+). It carries out the reaction L-glutamine + H2O = L-glutamate + NH4(+). The enzyme catalyses UTP + NH4(+) + ATP = CTP + ADP + phosphate + 2 H(+). It participates in pyrimidine metabolism; CTP biosynthesis via de novo pathway; CTP from UDP: step 2/2. Its activity is regulated as follows. Allosterically activated by GTP, when glutamine is the substrate; GTP has no effect on the reaction when ammonia is the substrate. The allosteric effector GTP functions by stabilizing the protein conformation that binds the tetrahedral intermediate(s) formed during glutamine hydrolysis. Inhibited by the product CTP, via allosteric rather than competitive inhibition. Functionally, catalyzes the ATP-dependent amination of UTP to CTP with either L-glutamine or ammonia as the source of nitrogen. Regulates intracellular CTP levels through interactions with the four ribonucleotide triphosphates. In Chlorobium luteolum (strain DSM 273 / BCRC 81028 / 2530) (Pelodictyon luteolum), this protein is CTP synthase.